Consider the following 533-residue polypeptide: Histone-arginine methyltransferase CARMER (533 aa).

The 310-residue stretch at alanine 143 to histidine 452 folds into the SAM-dependent MTase PRMT-type domain. Glutamine 156, arginine 165, glycine 189, glutamate 211, glutamate 240, and threonine 268 together coordinate S-adenosyl-L-methionine. Arginine 503 is modified (asymmetric dimethylarginine; by autocatalysis).

This sequence belongs to the class I-like SAM-binding methyltransferase superfamily. Protein arginine N-methyltransferase family. As to quaternary structure, homodimer. In terms of processing, the dimethylated protein is the major form.

The protein resides in the cytoplasm. It localises to the nucleus. The catalysed reaction is L-arginyl-[protein] + 2 S-adenosyl-L-methionine = N(omega),N(omega)-dimethyl-L-arginyl-[protein] + 2 S-adenosyl-L-homocysteine + 2 H(+). Methylates (mono- and asymmetric dimethylation) the guanidino nitrogens of arginyl residues in proteins. May methylate histone H3 at 'Arg-17' and activate transcription via chromatin remodeling. This Drosophila willistoni (Fruit fly) protein is Histone-arginine methyltransferase CARMER (Art4).